We begin with the raw amino-acid sequence, 469 residues long: Adenosylhomocysteinase (469 aa).

Thr63, Asp139, and Glu164 together coordinate substrate. 165-167 (TTT) serves as a coordination point for NAD(+). Residues Lys194 and Asp198 each contribute to the substrate site. Residues Asn199, 228–233 (GYGDVG), Glu251, Asn300, 321–323 (IGH), and Asn375 each bind NAD(+).

The protein belongs to the adenosylhomocysteinase family. NAD(+) serves as cofactor.

It localises to the cytoplasm. The enzyme catalyses S-adenosyl-L-homocysteine + H2O = L-homocysteine + adenosine. Its pathway is amino-acid biosynthesis; L-homocysteine biosynthesis; L-homocysteine from S-adenosyl-L-homocysteine: step 1/1. May play a key role in the regulation of the intracellular concentration of adenosylhomocysteine. In Pseudomonas aeruginosa (strain LESB58), this protein is Adenosylhomocysteinase.